The primary structure comprises 388 residues: Probable proton-coupled zinc antiporter SLC30A3 (388 aa).

Residues 1–13 show a composition bias toward polar residues; it reads MEPSPTTGGSETT. 2 disordered regions span residues 1-30 and 35-54; these read MEPS…GLRL and TEAP…SFHH. At 1–75 the chain is on the cytoplasmic side; it reads MEPSPTTGGS…TPERMQAQRQ (75 aa). A helical membrane pass occupies residues 76 to 96; sequence LCTACAVCCVFMAGEVVGGYL. Topologically, residues 97 to 105 are lumenal; sequence AHSLAIMTD. The chain crosses the membrane as a helical span at residues 106-126; the sequence is AAHLLADVGSMMGSLFSLWLS. Residues His-108 and Asp-112 each coordinate Zn(2+). Residues 127–145 are Cytoplasmic-facing; the sequence is TRPATRTMTFGWHRSETLG. A helical transmembrane segment spans residues 146–166; that stretch reads ALASVVSLWMVTGILLYLAFI. Topologically, residues 167–177 are lumenal; sequence RLLHSDYHIEG. A helical transmembrane segment spans residues 178-198; it reads GAMLLTASIAVCANLLMAFVL. The Cytoplasmic portion of the chain corresponds to 199–235; sequence HQAGPPHSHGSRGAEYAPLEEGSGEPLPLGNTSVRAA. A helical transmembrane segment spans residues 236–256; that stretch reads FVHVLGDLLQSLGVLIASILI. 2 residues coordinate Zn(2+): His-238 and Asp-242. Residues 257-264 lie on the Lumenal side of the membrane; that stretch reads YFKPQYKA. The chain crosses the membrane as a helical span at residues 265-285; sequence ADPISTFLFSICALGSTAPTL. The Cytoplasmic segment spans residues 286–388; sequence RDVLRVLMEG…CLRCQEPPQA (103 aa).

The protein belongs to the cation diffusion facilitator (CDF) transporter (TC 2.A.4) family. SLC30A subfamily. Homodimer. Homodimerization could regulate efficiency of zinc transport. Interacts with TMEM163.

Its subcellular location is the cytoplasmic vesicle. The protein localises to the secretory vesicle. The protein resides in the synaptic vesicle membrane. It is found in the synapse. It localises to the synaptosome. Its subcellular location is the late endosome membrane. The protein localises to the lysosome membrane. It carries out the reaction Zn(2+)(in) + 2 H(+)(out) = Zn(2+)(out) + 2 H(+)(in). In terms of biological role, probable proton-coupled zinc ion antiporter mediating the import of zinc from cytoplasm into synaptic vesicles and participating to cellular zinc ion homeostasis in the brain. The protein is Probable proton-coupled zinc antiporter SLC30A3 of Bos taurus (Bovine).